Consider the following 460-residue polypeptide: Cysteine--tRNA ligase (460 aa).

Cys28 serves as a coordination point for Zn(2+). The 'HIGH' region motif lies at 30–40 (MTVYDYCHLGH). Positions 209, 234, and 238 each coordinate Zn(2+). Positions 266-270 (KMSKS) match the 'KMSKS' region motif. Lys269 contacts ATP.

It belongs to the class-I aminoacyl-tRNA synthetase family. As to quaternary structure, monomer. The cofactor is Zn(2+).

The protein localises to the cytoplasm. It catalyses the reaction tRNA(Cys) + L-cysteine + ATP = L-cysteinyl-tRNA(Cys) + AMP + diphosphate. This is Cysteine--tRNA ligase from Pseudomonas syringae pv. syringae (strain B728a).